Consider the following 416-residue polypeptide: Probable histone-binding protein lin-53 (416 aa).

WD repeat units follow at residues 118–158 (NHEG…SVPK), 170–210 (GHTK…GANG), 220–260 (GHES…PGHA), 263–303 (AHSA…LKLH), 307–347 (SHRD…EDQT), and 364–404 (GHTA…YNDV).

This sequence belongs to the WD repeat RBAP46/RBAP48/MSI1 family. Binds directly to helix 1 of the histone fold of histone H4, a region that is not accessible when H4 is in chromatin. Probable component of a NuRD-like complex, composed of at least lin-53 and hda-1. Interacts with lin-35. Interacts with hda-1; the interaction is direct. Component of the DRM complex, at least composed of lin-9, lin-35, lin-37, lin-52, lin-53, lin-54- dpl-1 and efl-1. Interacts with hcp-3.

It is found in the nucleus. It localises to the chromosome. Its subcellular location is the centromere. In terms of biological role, core histone-binding subunit that may target chromatin assembly factors, chromatin remodeling factors and histone deacetylases to their histone substrates in a manner that is regulated by nucleosomal DNA. Required for hcp-3 and his-1 stabilization, localization of hcp-3 to centromeres and for proper chromosome segregation. Synthetic multivulva class B (synMuvB) protein. SynMuvB proteins are required to repress the induction of vulval development by Ras signaling and probably act by forming the multiprotein DRM complex that represses transcription. In Caenorhabditis briggsae, this protein is Probable histone-binding protein lin-53.